A 682-amino-acid chain; its full sequence is Cyclic nucleotide-gated cation channel (682 aa).

The segment at 1 to 41 (MTGQAALERSVSSHRLSVRSRLEGEAERAESAISRTDGDDD) is disordered. The Cytoplasmic segment spans residues 1 to 136 (MTGQAALERS…EGFVVSQSDD (136 aa)). The span at 20–30 (SRLEGEAERAE) shows a compositional bias: basic and acidic residues. The chain crosses the membrane as a helical span at residues 137–157 (IYYYWLFFIALASLYNWIMLV). At 158–169 (ARACFDQLQDEN) the chain is on the extracellular side. Residues 170–190 (FFLWVGLDYLCDVIYILDTCI) traverse the membrane as a helical segment. At 191-218 (RLRTGYLEQGLLVKDLAKLRDNYIRTLQ) the chain is on the cytoplasmic side. The chain crosses the membrane as a helical span at residues 219–239 (FKLDFLSILPTELLFFVTGYV). Topologically, residues 240–272 (PQLRFNRLLRFSRMFEFFDRTETRTNYPNAFRI) are extracellular. Residues 273 to 293 (CNLILYILVIIHWNACIYYAI) traverse the membrane as a helical segment. Residues 294-311 (SKALGLSSDTWVYSGQNK) are Cytoplasmic-facing. Residues 312–332 (TLSFCYVYCFYWSTLTLTTIG) form a helical membrane-spanning segment. At 333-343 (EMPPPVKDEEY) the chain is on the extracellular side. The helical transmembrane segment at 344–364 (VFVVFDFLVGVLIFATIVGNV) threads the bilayer. Residues 365 to 682 (GSMIANMNAT…SAETNSEEET (318 aa)) are Cytoplasmic-facing. Residues 455 to 577 (LLVE…QGLL), glutamate 514, and arginine 529 each bind 3',5'-cyclic AMP. Residues 649–682 (GEHAGVPTHTHADIHAQPETHTRTSAETNSEEET) are disordered. Over residues 658–672 (THADIHAQPETHTRT) the composition is skewed to basic and acidic residues.

This sequence belongs to the cyclic nucleotide-gated cation channel (TC 1.A.1.5) family. Olfactory neurons.

Its subcellular location is the membrane. Functionally, this cyclic nucleotide-gated channel is activated equally well by both cAMP and cGMP. This chain is Cyclic nucleotide-gated cation channel, found in Ictalurus punctatus (Channel catfish).